Reading from the N-terminus, the 471-residue chain is WASH complex subunit 1 (471 aa).

Positions 1 to 54 (MTPTGTQHSLAGQTYAVPLIQPDLRREEAIQQVADALQYLQKVSGDIFSRISQR) are required for WASH complex assembly. The interval 1–167 (MTPTGTQHSL…EGLGGLPSNI (167 aa)) is WHD1. The tract at residues 297 to 471 (EDGVLTARPP…GEEDEDDWES (175 aa)) is disordered. A compositionally biased stretch (pro residues) spans 304–336 (RPPPPPPPPPPPAPAVLMSVPPPPPPPQAPPGQ). The interval 353–471 (QGAPKEVVDP…GEEDEDDWES (119 aa)) is VCA. The 23-residue stretch at 365–387 (GRATLLESIRQAGGIGKAKLRSV) folds into the WH2 domain. Basic and acidic residues predominate over residues 386–402 (SVKERKLEKKKQKEQEQ). Residues 428 to 442 (SGKGPGSGASEGPGG) are compositionally biased toward gly residues. Residues 462-471 (GEEDEDDWES) show a composition bias toward acidic residues.

Belongs to the WASH1 family. Component of the WASH core complex also described as WASH regulatory complex SHRC composed of WASHC1, WASHC2, WASHC3, WASHC4 and WASHC5. The WASH core complex associates with the F-actin-capping protein dimer (formed by CAPZA1, CAPZA2 or CAPZA3 and CAPZB); the assembly has been initially described as WASH complex. Interacts (via WHD1 region) with WASHC2; the interaction is direct. Interacts with alpha-tubulin. Interacts with BECN1; WASHC1 and AMBRA1 can competitively interact with BECN1. Interacts with BLOC1S2; may associate with the BLOC-1 complex. Interacts with tubulin gamma chain (TUBG1 or TUBG2). Interacts with TBC1D23.

Its subcellular location is the early endosome membrane. The protein resides in the recycling endosome membrane. The protein localises to the late endosome. It is found in the cytoplasmic vesicle. It localises to the autophagosome. Its subcellular location is the cytoplasm. The protein resides in the cytoskeleton. The protein localises to the microtubule organizing center. It is found in the centrosome. It localises to the centriole. Its function is as follows. Acts as a component of the WASH core complex that functions as a nucleation-promoting factor (NPF) at the surface of endosomes, where it recruits and activates the Arp2/3 complex to induce actin polymerization, playing a key role in the fission of tubules that serve as transport intermediates during endosome sorting. Involved in endocytic trafficking of EGF. Involved in transferrin receptor recycling. Regulates the trafficking of endosomal alpha5beta1 integrin to the plasma membrane and involved in invasive cell migration. In T-cells involved in endosome-to-membrane recycling of receptors including T-cell receptor (TCR), CD28 and ITGAL; proposed to be implicated in T-cell proliferation and effector function. In dendritic cells involved in endosome-to-membrane recycling of major histocompatibility complex (MHC) class II probably involving retromer and subsequently allowing antigen sampling, loading and presentation during T-cell activation. Involved in negative regulation of autophagy independently from its role in endosomal sorting by inhibiting BECN1 ubiquitination to inactivate PIK3C3/Vps34 activity. This Bos taurus (Bovine) protein is WASH complex subunit 1.